The primary structure comprises 31 residues: Phallacidin proprotein 1 (31 aa).

A propeptide spanning residues 1-10 (MSDINATRLP) is cleaved from the precursor. Positions 11 to 17 (AWLVDCP) form a cross-link, cyclopeptide (Ala-Pro). The 2'-cysteinyl-6'-hydroxytryptophan sulfoxide (Trp-Cys) cross-link spans 12-16 (WLVDC). The propeptide occupies 18 to 31 (CVGDDVNRLLTRGE).

The protein belongs to the MSDIN fungal toxin family. Processed by the macrocyclase-peptidase enzyme POPB to yield a toxic cyclic heptapeptide. POPB first removes 10 residues from the N-terminus. Conformational trapping of the remaining peptide forces the enzyme to release this intermediate rather than proceed to macrocyclization. The enzyme rebinds the remaining peptide in a different conformation and catalyzes macrocyclization of the N-terminal 7 residues.

Its function is as follows. Major toxin that belongs to the bicyclic heptapeptides called phallotoxins. Although structurally related to amatoxins, phallotoxins have a different mode of action, which is the stabilization of F-actin. Phallotoxins are poisonous when administered parenterally, but not orally because of poor absorption. The protein is Phallacidin proprotein 1 (PHA1_2) of Amanita bisporigera (Destroying angel).